A 275-amino-acid polypeptide reads, in one-letter code: Adenylate kinase (275 aa).

54-59 (GAGKGT) is an ATP binding site. An NMP region spans residues 74-103 (ATGDMLRSQVAKKTPLGREAKKIMDQGGLV). Residues threonine 75, arginine 80, 101-103 (GLV), 130-133 (GFPR), and glutamine 137 each bind AMP. The LID stretch occupies residues 171-208 (GRLVHPASGRSYHRVFNPPKADMKDDITGEPLVSRSDD). ATP-binding positions include arginine 172 and 181 to 182 (SY). Residues arginine 205 and arginine 216 each contribute to the AMP site. Glutamine 244 provides a ligand contact to ATP.

It belongs to the adenylate kinase family. AK2 subfamily. In terms of assembly, monomer.

The protein localises to the cytoplasm. The protein resides in the cytosol. Its subcellular location is the mitochondrion intermembrane space. It catalyses the reaction AMP + ATP = 2 ADP. Catalyzes the reversible transfer of the terminal phosphate group between ATP and AMP. Plays an important role in cellular energy homeostasis and in adenine nucleotide metabolism. Adenylate kinase activity is critical for regulation of the phosphate utilization and the AMP de novo biosynthesis pathways. This is Adenylate kinase (adk1) from Botryotinia fuckeliana (strain B05.10) (Noble rot fungus).